Reading from the N-terminus, the 159-residue chain is U-actitoxin-Avd13b (159 aa).

The first 18 residues, 1–18, serve as a signal peptide directing secretion; sequence MKSIFLVFFAVCLVKAEA. The propeptide occupies 19–26; that stretch reads GKGRKREP. Intrachain disulfides connect C33-C45 and C36-C52. Residues 59–60 constitute a propeptide that is removed on maturation; it reads EP. Intrachain disulfides connect C67–C79 and C70–C86. A propeptide spanning residues 93–94 is cleaved from the precursor; that stretch reads EP. Intrachain disulfides connect C101–C113 and C104–C120. The propeptide occupies 127–128; the sequence is EP. Cystine bridges form between C135/C147 and C138/C154.

Belongs to the sea anemone BBH family.

Its subcellular location is the secreted. It is found in the nematocyst. Functionally, inhibits ion channels. This Anemonia viridis (Snakelocks anemone) protein is U-actitoxin-Avd13b.